A 153-amino-acid polypeptide reads, in one-letter code: Aspartate carbamoyltransferase regulatory chain (153 aa).

Zn(2+)-binding residues include Cys-108, Cys-113, Cys-137, and Cys-140.

It belongs to the PyrI family. Contains catalytic and regulatory chains. Requires Zn(2+) as cofactor.

Its function is as follows. Involved in allosteric regulation of aspartate carbamoyltransferase. The protein is Aspartate carbamoyltransferase regulatory chain of Methanosphaera stadtmanae (strain ATCC 43021 / DSM 3091 / JCM 11832 / MCB-3).